The primary structure comprises 539 residues: T-complex protein 1 subunit delta (539 aa).

The interval 1 to 28 (MPENVASRSGPPAAGPGNRGKGAYQDRD) is disordered. R19 carries the post-translational modification Omega-N-methylarginine. K21 bears the N6-acetyllysine mark. S36 carries the phosphoserine modification. G53 contacts ADP. An ATP-binding site is contributed by G53. D104 is a Mg(2+) binding site. Residues G105, T106, T107, S108, N172, S173, and K174 each coordinate ADP. ATP-binding residues include G105 and T106. K174 contributes to the ATP binding site. Residues S184 and S202 each carry the phosphoserine modification. An N6-acetyllysine mark is found at K288, K302, K319, and K326. G425 provides a ligand contact to ADP. A Phosphoserine modification is found at S444. Q510 serves as a coordination point for ADP.

It belongs to the TCP-1 chaperonin family. Component of the chaperonin-containing T-complex (TRiC), a hexadecamer composed of two identical back-to-back stacked rings enclosing a protein folding chamber. Each ring is made up of eight different subunits: TCP1/CCT1, CCT2, CCT3, CCT4, CCT5, CCT6A/CCT6, CCT7, CCT8. Interacts with PACRG. Interacts with DNAAF4. Interacts with DLEC1.

It is found in the cytoplasm. Its subcellular location is the melanosome. The protein localises to the cytoskeleton. It localises to the microtubule organizing center. The protein resides in the centrosome. It is found in the cilium basal body. It catalyses the reaction ATP + H2O = ADP + phosphate + H(+). In terms of biological role, component of the chaperonin-containing T-complex (TRiC), a molecular chaperone complex that assists the folding of actin, tubulin and other proteins upon ATP hydrolysis. The TRiC complex mediates the folding of WRAP53/TCAB1, thereby regulating telomere maintenance. As part of the TRiC complex may play a role in the assembly of BBSome, a complex involved in ciliogenesis regulating transports vesicles to the cilia. This chain is T-complex protein 1 subunit delta (Cct4), found in Rattus norvegicus (Rat).